Here is a 203-residue protein sequence, read N- to C-terminus: Superoxide dismutase [Mn] (203 aa).

Residues His27, His81, Asp164, and His168 each coordinate Mn(2+).

This sequence belongs to the iron/manganese superoxide dismutase family. As to quaternary structure, homodimer. Requires Mn(2+) as cofactor.

The catalysed reaction is 2 superoxide + 2 H(+) = H2O2 + O2. Destroys superoxide anion radicals which are normally produced within the cells and which are toxic to biological systems. This Pseudomonas putida (Arthrobacter siderocapsulatus) protein is Superoxide dismutase [Mn] (sodA).